Reading from the N-terminus, the 282-residue chain is HTH-type transcriptional activator RhaR (282 aa).

Positions 179-277 (DKLITALANS…GMTPSQWRHL (99 aa)) constitute an HTH araC/xylS-type domain. 2 consecutive DNA-binding regions (H-T-H motif) follow at residues 196–217 (DAFCQQEQCSERVLRQQFRAQT) and 244–267 (ISEISMQCGFEDSNYFSVVFTRET).

In terms of assembly, binds DNA as a dimer.

It is found in the cytoplasm. In terms of biological role, activates expression of the rhaSR operon in response to L-rhamnose. This chain is HTH-type transcriptional activator RhaR, found in Salmonella schwarzengrund (strain CVM19633).